Consider the following 661-residue polypeptide: Coagulation factor XIII B chain (661 aa).

A signal peptide spans 1–20 (MRLKNLTFIIILIISGELYA). Sushi domains lie at 24 to 88 (PCGF…PRCF), 89 to 148 (KKCT…TCRK), 151 to 210 (ETCL…KCTK), 211 to 269 (LKCS…VCEG), 272 to 329 (NRCP…KCIE), 334 to 391 (VACE…ECVE), 394 to 452 (ENCK…VCLE), 453 to 516 (PCTV…PLCT), 522 to 580 (GMCT…LCLE), and 581 to 647 (PCTL…PRCI). 20 disulfides stabilise this stretch: Cys25–Cys76, Cys59–Cys87, Cys91–Cys135, Cys118–Cys146, Cys153–Cys197, Cys180–Cys208, Cys213–Cys255, Cys241–Cys267, Cys274–Cys316, Cys302–Cys327, Cys336–Cys378, Cys364–Cys389, Cys396–Cys439, Cys425–Cys450, Cys454–Cys505, Cys486–Cys515, Cys524–Cys567, Cys553–Cys578, Cys582–Cys636, and Cys616–Cys646. The N-linked (GlcNAc...) asparagine glycan is linked to Asn162. Asn545 carries N-linked (GlcNAc...) asparagine glycosylation. Residues 617–619 (RGD) carry the Cell attachment site motif.

In terms of assembly, tetramer of two A chains (F13A1) and two B (F13B) chains.

Its subcellular location is the secreted. Functionally, the B chain of factor XIII is not catalytically active, but is thought to stabilize the A subunits and regulate the rate of transglutaminase formation by thrombin. The polypeptide is Coagulation factor XIII B chain (F13B) (Homo sapiens (Human)).